We begin with the raw amino-acid sequence, 321 residues long: Porphobilinogen deaminase (321 aa).

The residue at position 243 (C243) is an S-(dipyrrolylmethanemethyl)cysteine.

This sequence belongs to the HMBS family. As to quaternary structure, monomer. Requires dipyrromethane as cofactor.

The enzyme catalyses 4 porphobilinogen + H2O = hydroxymethylbilane + 4 NH4(+). Its pathway is porphyrin-containing compound metabolism; protoporphyrin-IX biosynthesis; coproporphyrinogen-III from 5-aminolevulinate: step 2/4. Its function is as follows. Tetrapolymerization of the monopyrrole PBG into the hydroxymethylbilane pre-uroporphyrinogen in several discrete steps. The chain is Porphobilinogen deaminase from Histophilus somni (strain 129Pt) (Haemophilus somnus).